The chain runs to 708 residues: Pre-mRNA-splicing factor SPP382 (708 aa).

A G-patch domain is found at 61–108; the sequence is TYGIGAKLLSSMGYVAGKGLGKDGSGITTPIETQSRPMHNAGLGMFSN.

In terms of assembly, component of the NTR complex (NTC-related complex), composed of NTR1, NTR2 and PRP43. Interacts with CLF1 and NTR2. Interacts with PRP43 and PRP45.

The protein resides in the cytoplasm. It localises to the nucleus. In terms of biological role, involved in pre-mRNA splicing and spliceosome disassembly. Promotes release of excised lariat intron from the spliceosome by acting as a receptor for PRP43. This targeting of PRP43 leads to disassembly of the spliceosome with the separation of the U2, U5, U6 snRNPs and the NTC complex. This is Pre-mRNA-splicing factor SPP382 (SPP382) from Saccharomyces cerevisiae (strain ATCC 204508 / S288c) (Baker's yeast).